Consider the following 146-residue polypeptide: Probable flagellum biosynthesis repressor protein FlbT 1 (146 aa).

Belongs to the FlbT family.

Its function is as follows. Has a post-transcriptional repressor function in flagellum biogenesis. Associates with the 5'-UTR of fljK mRNA and promotes its degradation. The protein is Probable flagellum biosynthesis repressor protein FlbT 1 of Bradyrhizobium diazoefficiens (strain JCM 10833 / BCRC 13528 / IAM 13628 / NBRC 14792 / USDA 110).